Reading from the N-terminus, the 186-residue chain is Methylamine dehydrogenase light chain (186 aa).

Residues M1–A57 constitute a signal peptide (tat-type signal). 6 disulfides stabilise this stretch: C78-C143, C84-C116, C91-C176, C93-C141, C101-C132, and C133-C164. W112 bears the Tryptophylquinone mark. The tryptophan tryptophylquinone (Trp-Trp) cross-link spans W112–W163.

It belongs to the aromatic amine dehydrogenase light chain family. In terms of assembly, heterotetramer of two light and two heavy chains. The cofactor is tryptophan tryptophylquinone residue. Post-translationally, predicted to be exported by the Tat system. The position of the signal peptide cleavage has not been experimentally proven. Tryptophan tryptophylquinone (TTQ) is formed by oxidation of the indole ring of a tryptophan to form tryptophylquinone followed by covalent cross-linking with another tryptophan residue.

The protein localises to the periplasm. The catalysed reaction is 2 oxidized [amicyanin] + methylamine + H2O = 2 reduced [amicyanin] + formaldehyde + NH4(+) + 2 H(+). It functions in the pathway one-carbon metabolism; methylamine degradation; formaldehyde from methylamine: step 1/1. Methylamine dehydrogenase carries out the oxidation of methylamine. Electrons are passed from methylamine dehydrogenase to amicyanin. This Methylobacillus flagellatus (strain ATCC 51484 / DSM 6875 / VKM B-1610 / KT) protein is Methylamine dehydrogenase light chain (mauA).